The following is a 205-amino-acid chain: Putative endonuclease segE (205 aa).

Residues 1 to 84 (MYHFVYETTN…LIKSKNYYNM (84 aa)) form the GIY-YIG domain.

This sequence to endonucleases of group I introns of fungi and phage. It depends on Mg(2+) as a cofactor.

Its function is as follows. Probably involved in the movement of the endonuclease-encoding DNA. This chain is Putative endonuclease segE (segE), found in Escherichia coli (Bacteriophage T4).